Reading from the N-terminus, the 241-residue chain is 1-(5-phosphoribosyl)-5-[(5-phosphoribosylamino)methylideneamino] imidazole-4-carboxamide isomerase (241 aa).

The active-site Proton acceptor is the Asp8. Asp130 (proton donor) is an active-site residue.

The protein belongs to the HisA/HisF family.

It is found in the cytoplasm. It carries out the reaction 1-(5-phospho-beta-D-ribosyl)-5-[(5-phospho-beta-D-ribosylamino)methylideneamino]imidazole-4-carboxamide = 5-[(5-phospho-1-deoxy-D-ribulos-1-ylimino)methylamino]-1-(5-phospho-beta-D-ribosyl)imidazole-4-carboxamide. It participates in amino-acid biosynthesis; L-histidine biosynthesis; L-histidine from 5-phospho-alpha-D-ribose 1-diphosphate: step 4/9. This chain is 1-(5-phosphoribosyl)-5-[(5-phosphoribosylamino)methylideneamino] imidazole-4-carboxamide isomerase, found in Leptospira borgpetersenii serovar Hardjo-bovis (strain JB197).